We begin with the raw amino-acid sequence, 173 residues long: Translation initiation factor IF-3 (173 aa).

The protein belongs to the IF-3 family. As to quaternary structure, monomer.

It localises to the cytoplasm. Functionally, IF-3 binds to the 30S ribosomal subunit and shifts the equilibrium between 70S ribosomes and their 50S and 30S subunits in favor of the free subunits, thus enhancing the availability of 30S subunits on which protein synthesis initiation begins. The sequence is that of Translation initiation factor IF-3 from Caulobacter sp. (strain K31).